A 378-amino-acid polypeptide reads, in one-letter code: Quinolinate synthase (378 aa).

Iminosuccinate contacts are provided by histidine 59 and serine 80. Cysteine 125 provides a ligand contact to [4Fe-4S] cluster. Residues 151 to 153 and serine 168 each bind iminosuccinate; that span reads YAN. Cysteine 212 lines the [4Fe-4S] cluster pocket. Iminosuccinate contacts are provided by residues 238–240 and threonine 255; that span reads HPE. Position 309 (cysteine 309) interacts with [4Fe-4S] cluster.

This sequence belongs to the quinolinate synthase family. Type 1 subfamily. It depends on [4Fe-4S] cluster as a cofactor.

Its subcellular location is the cytoplasm. It catalyses the reaction iminosuccinate + dihydroxyacetone phosphate = quinolinate + phosphate + 2 H2O + H(+). It functions in the pathway cofactor biosynthesis; NAD(+) biosynthesis; quinolinate from iminoaspartate: step 1/1. Its function is as follows. Catalyzes the condensation of iminoaspartate with dihydroxyacetone phosphate to form quinolinate. The polypeptide is Quinolinate synthase (Burkholderia mallei (strain NCTC 10247)).